Reading from the N-terminus, the 154-residue chain is Terephthalate 1,2-dioxygenase, terminal oxygenase component subunit beta 1 (154 aa).

It belongs to the bacterial ring-hydroxylating dioxygenase beta subunit family. Heterotetramer composed of 2 alpha (TphA2I and TphA2II) and 2 beta (TphA3I and TphA3II) subunits. Part of a multicomponent enzyme system composed of a reductase (TphA1I or TphA1II) and a two-subunit oxygenase component (TphA2I or TphA2II and TphA3I or TphA3II). Fe cation is required as a cofactor.

It carries out the reaction terephthalate + NADH + O2 + H(+) = (3S,4R)-3,4-dihydroxycyclohexa-1,5-diene-1,4-dicarboxylate + NAD(+). With respect to regulation, inhibited by EDTA. Component of the terephthalate 1,2-dioxygenase multicomponent enzyme system which catalyzes the dioxygenation of terephthalate (TER/TPA) to 1,2-dihydroxy-3,5-cyclohexadiene-1,4-dicarboxylic acid (DCD). It can also use 2,5-dicarboxypyridine (PDC) and 1,4-napthalenedicarboxylic acid (NDC) as substrates, and preferentially uses NADPH which is the physiological electron donor. In Comamonas sp, this protein is Terephthalate 1,2-dioxygenase, terminal oxygenase component subunit beta 1 (tphA3I).